The following is a 487-amino-acid chain: Aspartyl/glutamyl-tRNA(Asn/Gln) amidotransferase subunit B (487 aa).

The protein belongs to the GatB/GatE family. GatB subfamily. Heterotrimer of A, B and C subunits.

The enzyme catalyses L-glutamyl-tRNA(Gln) + L-glutamine + ATP + H2O = L-glutaminyl-tRNA(Gln) + L-glutamate + ADP + phosphate + H(+). It catalyses the reaction L-aspartyl-tRNA(Asn) + L-glutamine + ATP + H2O = L-asparaginyl-tRNA(Asn) + L-glutamate + ADP + phosphate + 2 H(+). Functionally, allows the formation of correctly charged Asn-tRNA(Asn) or Gln-tRNA(Gln) through the transamidation of misacylated Asp-tRNA(Asn) or Glu-tRNA(Gln) in organisms which lack either or both of asparaginyl-tRNA or glutaminyl-tRNA synthetases. The reaction takes place in the presence of glutamine and ATP through an activated phospho-Asp-tRNA(Asn) or phospho-Glu-tRNA(Gln). This chain is Aspartyl/glutamyl-tRNA(Asn/Gln) amidotransferase subunit B, found in Chlamydia abortus (strain DSM 27085 / S26/3) (Chlamydophila abortus).